The primary structure comprises 399 residues: Chorismate synthase (399 aa).

The interval Ile-41–Gln-72 is disordered. Arg-48 serves as a coordination point for NADP(+). FMN is bound by residues Arg-125–Ser-127, Gly-288, His-303–Ser-307, and Arg-330. Composition is skewed to basic and acidic residues over residues Pro-363 to Tyr-377 and Ala-389 to Asp-399. A disordered region spans residues Pro-363–Asp-399.

Belongs to the chorismate synthase family. Requires FMNH2 as cofactor.

It catalyses the reaction 5-O-(1-carboxyvinyl)-3-phosphoshikimate = chorismate + phosphate. Its pathway is metabolic intermediate biosynthesis; chorismate biosynthesis; chorismate from D-erythrose 4-phosphate and phosphoenolpyruvate: step 7/7. Functionally, catalyzes the anti-1,4-elimination of the C-3 phosphate and the C-6 proR hydrogen from 5-enolpyruvylshikimate-3-phosphate (EPSP) to yield chorismate, which is the branch point compound that serves as the starting substrate for the three terminal pathways of aromatic amino acid biosynthesis. This reaction introduces a second double bond into the aromatic ring system. The protein is Chorismate synthase of Haloarcula marismortui (strain ATCC 43049 / DSM 3752 / JCM 8966 / VKM B-1809) (Halobacterium marismortui).